We begin with the raw amino-acid sequence, 302 residues long: MYYGFDIGGTKIALGVFDSTRRLQWEKRVPTPHTSYSAFLDAVCELVAEADQRFGVKGSVGIGIPGMPETEDGTLYAANVPAASGKPLRADLSARLDRDVRLDNDANCFALSEAWDDEFTQYPLVMGLILGTGGGGLVLNGKPITGQSYITGEFGHMRLPVDALTLMGFDFPLRRCGCGQMGCIENYLSGRGFAWLYQHYYDQSLQAPEIIALWEQGDEQAHAHVERYLDLLAVCLGNILTIVDPDLLVIGGGLSNFTAITTQLAERLPRHLLPVARAPRIERARHGDAGGMRGAAFLHLTD.

Residues 4–11 and 133–139 contribute to the ATP site; these read GFDIGGTK and GGGGLVL. The Zn(2+) site is built by histidine 156, cysteine 176, cysteine 178, and cysteine 183.

This sequence belongs to the ROK (NagC/XylR) family. NagK subfamily.

The enzyme catalyses N-acetyl-D-glucosamine + ATP = N-acetyl-D-glucosamine 6-phosphate + ADP + H(+). It participates in cell wall biogenesis; peptidoglycan recycling. In terms of biological role, catalyzes the phosphorylation of N-acetyl-D-glucosamine (GlcNAc) derived from cell-wall degradation, yielding GlcNAc-6-P. This Salmonella typhi protein is N-acetyl-D-glucosamine kinase.